Reading from the N-terminus, the 373-residue chain is Putative C-P lyase subunit protein HtxH (373 aa).

The protein belongs to the PhnI family.

Belongs to an operon involved in hypophosphite oxidation. Exact function not known. The polypeptide is Putative C-P lyase subunit protein HtxH (htxH) (Stutzerimonas stutzeri (Pseudomonas stutzeri)).